We begin with the raw amino-acid sequence, 263 residues long: MASGKKLIDQLCSVVSSFLCPSISSLDIDRCAVGPHIFSRGSSQAICTVKLLHGEVYNLEFVYRYWAHILEKYNFPFSPTFIICNNGLAVTLKCYVSEPRDLSSRYGQATSMALDVNLQRNSFVVLSQDDFIKFKTPLVFAKDLDITNSMVVCRTYLTSSRNSLQFLVVKSKNPRRLENVLDMIKRAVEATGSNLPATREKPLPLEQTEQLESTLPSSGHLRVLQSTSLTGRCPSWGAACALLLLSLAVGLMAILAAKLMQWP.

Over 1–235 the chain is Perinuclear space; it reads MASGKKLIDQ…STSLTGRCPS (235 aa). A helical transmembrane segment spans residues 236-256; the sequence is WGAACALLLLSLAVGLMAILA. Residues 257-263 are Nuclear-facing; that stretch reads AKLMQWP.

Belongs to the herpesviridae NEC2 protein family. In terms of assembly, forms a heterohexameric complex with NEC1. In terms of processing, phosphorylated.

The protein resides in the host nucleus inner membrane. Plays an essential role in virion nuclear egress, the first step of virion release from infected cell. Within the host nucleus, NEC1 interacts with the newly formed capsid through the vertexes and directs it to the inner nuclear membrane by associating with NEC2. Induces the budding of the capsid at the inner nuclear membrane as well as its envelopment into the perinuclear space. There, the NEC1/NEC2 complex promotes the fusion of the enveloped capsid with the outer nuclear membrane and the subsequent release of the viral capsid into the cytoplasm where it will reach the secondary budding sites in the host Golgi or trans-Golgi network. In Connochaetes taurinus (Blue wildebeest), this protein is Nuclear egress protein 2.